A 355-amino-acid polypeptide reads, in one-letter code: MVNFFQIALVLIGSTGIINHVIIIPMLLDHSGRDSWISIIILSLVYIIWIPCVFIVHKYTREEHLFSWLMRNYGGFITYPLLSIIVLYLIILGTVTLKETLTFFSFYLPETPRILLGVLLSIICFYNIQRGVQSIALTTGILLPVVFLLGFFVMIANFPHKDYSLLKPIMEHGMDPVIKGMIYPAAGFVELIFILFLQHHIGSKIKLSQLIIVGIILAGITLGPTIAAIVEFGPFVAANQRYPTFEEWRLVSIGKYIEHLDFLSVYQWLVGVFIRISLVIFLIPDVLQVTKQKARNQIISILLICMVIICILPISDASFYWFLSHVFLPISAIGLFLFSMLLLVFVWVSKNKKRA.

The next 10 membrane-spanning stretches (helical) occupy residues 2–24 (VNFF…VIII), 34–56 (DSWI…VFIV), 69–91 (LMRN…YLII), 106–128 (FYLP…FYNI), 135–157 (IALT…MIAN), 180–197 (GMIY…ILFL), 210–232 (LIIV…IVEF), 265–287 (VYQW…PDVL), 299–321 (ISIL…SFYW), and 326–348 (VFLP…FVWV).

This sequence belongs to the amino acid-polyamine-organocation (APC) superfamily. Spore germination protein (SGP) (TC 2.A.3.9) family.

It localises to the cell membrane. May allow B.anthracis to germinate within phagocytic cells and therefore involved in virulence. The protein is Spore germination protein XB (gerXB) of Bacillus anthracis.